A 510-amino-acid chain; its full sequence is Ribonuclease Y (510 aa).

Residues 2–22 traverse the membrane as a helical segment; that stretch reads IYIIFSSIFAGFILGFLVRVF. Positions 198–258 constitute a KH domain; that stretch reads TVASVELPND…IRKELAKRTL (61 aa). Positions 324–419 constitute an HD domain; that stretch reads VLSHSKETAI…VQIADAISAS (96 aa).

It belongs to the RNase Y family.

It localises to the cell membrane. Endoribonuclease that initiates mRNA decay. In Borrelia garinii subsp. bavariensis (strain ATCC BAA-2496 / DSM 23469 / PBi) (Borreliella bavariensis), this protein is Ribonuclease Y.